The following is a 592-amino-acid chain: Aspartate--tRNA(Asp/Asn) ligase (592 aa).

Glu172 provides a ligand contact to L-aspartate. The aspartate stretch occupies residues 196–199 (QLFK). Arg218 is an L-aspartate binding site. Residues 218–220 (RDE) and Gln227 contribute to the ATP site. His450 lines the L-aspartate pocket. Glu484 provides a ligand contact to ATP. L-aspartate is bound at residue Arg491. 536-539 (GLDR) contacts ATP.

The protein belongs to the class-II aminoacyl-tRNA synthetase family. Type 1 subfamily. Homodimer.

The protein resides in the cytoplasm. The enzyme catalyses tRNA(Asx) + L-aspartate + ATP = L-aspartyl-tRNA(Asx) + AMP + diphosphate. Its function is as follows. Aspartyl-tRNA synthetase with relaxed tRNA specificity since it is able to aspartylate not only its cognate tRNA(Asp) but also tRNA(Asn). Reaction proceeds in two steps: L-aspartate is first activated by ATP to form Asp-AMP and then transferred to the acceptor end of tRNA(Asp/Asn). This Thioalkalivibrio sulfidiphilus (strain HL-EbGR7) protein is Aspartate--tRNA(Asp/Asn) ligase.